A 205-amino-acid chain; its full sequence is MASASTTWSMSCLKSALPSIQPISSSSLRFSCGPSPSRLRICKPKSSSRLLHSFVGLAPLHPLLSLSSQDSTSFEHSFTVIDNGGRVFAMRHGRKVPKLNRPPDQRRALLRGLTTQLLKHGRIKTTKARARAVRKYVDKMITMAKDGSLHKRRQALGFIYEKQIVHALFAEVPDRYGERNGGYTRIIRTLPRRGDNAPMAYIELV.

The N-terminal 89 residues, 1-89, are a transit peptide targeting the chloroplast; it reads MASASTTWSM…VIDNGGRVFA (89 aa).

The protein belongs to the bacterial ribosomal protein bL17 family. As to quaternary structure, part of the 50S ribosomal subunit.

The protein resides in the plastid. It localises to the chloroplast. This protein binds directly to 23S ribosomal RNA. In Nicotiana tabacum (Common tobacco), this protein is Large ribosomal subunit protein bL17c (RPL17).